The following is a 905-amino-acid chain: Alanine--tRNA ligase (905 aa).

Positions 582, 586, 687, and 691 each coordinate Zn(2+).

This sequence belongs to the class-II aminoacyl-tRNA synthetase family. Requires Zn(2+) as cofactor.

The protein localises to the cytoplasm. The catalysed reaction is tRNA(Ala) + L-alanine + ATP = L-alanyl-tRNA(Ala) + AMP + diphosphate. In terms of biological role, catalyzes the attachment of alanine to tRNA(Ala) in a two-step reaction: alanine is first activated by ATP to form Ala-AMP and then transferred to the acceptor end of tRNA(Ala). Also edits incorrectly charged Ser-tRNA(Ala) and Gly-tRNA(Ala) via its editing domain. In Mycoplasma mobile (strain ATCC 43663 / 163K / NCTC 11711) (Mesomycoplasma mobile), this protein is Alanine--tRNA ligase.